We begin with the raw amino-acid sequence, 865 residues long: Leucine--tRNA ligase (865 aa).

The short motif at 44–54 (PYPSGRIHVGH) is the 'HIGH' region element. Residues 625-629 (KMSKS) carry the 'KMSKS' region motif. Lys-628 is an ATP binding site.

The protein belongs to the class-I aminoacyl-tRNA synthetase family.

The protein localises to the cytoplasm. It carries out the reaction tRNA(Leu) + L-leucine + ATP = L-leucyl-tRNA(Leu) + AMP + diphosphate. This Maricaulis maris (strain MCS10) (Caulobacter maris) protein is Leucine--tRNA ligase.